We begin with the raw amino-acid sequence, 186 residues long: HGPRTase-like protein 3 (186 aa).

Belongs to the purine/pyrimidine phosphoribosyltransferase family. Archaeal HPRT subfamily.

Functionally, may catalyze a purine salvage reaction, the substrate is unknown. The chain is HGPRTase-like protein 3 from Haloterrigena turkmenica (strain ATCC 51198 / DSM 5511 / JCM 9101 / NCIMB 13204 / VKM B-1734 / 4k) (Halococcus turkmenicus).